We begin with the raw amino-acid sequence, 212 residues long: Ras-related protein Rab-2A (212 aa).

An N-acetylalanine modification is found at Ala-2. Positions 2-19 (AYAYLFKYIIIGDTGVGK) are required for interaction with PRKCI. Positions 16, 17, 18, 19, 20, 21, and 38 each coordinate GTP. Ser-20 serves as a coordination point for Mg(2+). The Switch 1 signature appears at 37–42 (LTIGVE). Residues Thr-38 and Asp-61 each coordinate Mg(2+). The Switch 2 signature appears at 63–72 (AGQESFRSIT). GTP-binding residues include Gly-64, Asn-119, Lys-120, Asp-122, Ala-150, and Lys-151. The interval 190–212 (QHAATNASHGSNQGGQQAGGGCC) is disordered. The segment covering 201 to 212 (NQGGQQAGGGCC) has biased composition (gly residues). Residues Cys-211 and Cys-212 are each lipidated (S-geranylgeranyl cysteine).

This sequence belongs to the small GTPase superfamily. Rab family. In terms of assembly, interacts with PRKCI. Interacts with TRIP11. Interacts (in GTP-bound form) with GARIN1B. Interacts (GTP-bound) with HOPS complex component VPS39; interaction contributes to obtaining a functional HOPS complex that promotes autophagosome-lysosome membrane fusion driven by STX17-SNAP29-VAMP8. Interacts with VPS41. Mg(2+) serves as cofactor. In terms of processing, prenylated. Prenylation is required for association with cellular membranes.

It localises to the endoplasmic reticulum-Golgi intermediate compartment membrane. The protein resides in the melanosome. The protein localises to the endoplasmic reticulum membrane. It is found in the golgi apparatus membrane. Its subcellular location is the cytoplasmic vesicle. It localises to the secretory vesicle. The protein resides in the acrosome. The protein localises to the autophagosome membrane. The enzyme catalyses GTP + H2O = GDP + phosphate + H(+). Regulated by guanine nucleotide exchange factors (GEFs) which promote the exchange of bound GDP for free GTP, GTPase activating proteins (GAPs) which increase the GTP hydrolysis activity, and GDP dissociation inhibitors (GDIs) which inhibit the dissociation of the nucleotide from the GTPase. The small GTPases Rab are key regulators of intracellular membrane trafficking, from the formation of transport vesicles to their fusion with membranes. Rabs cycle between active GTP-bound and inactive GDP-bound states. In their active state, drive transport of vesicular carriers from donor organelles to acceptor organelles to regulate the membrane traffic that maintains organelle identity and morphology. RAB2A regulates autophagy by promoting autophagosome-lysosome fusion via recruitment of the HOPS endosomal tethering complex; this process involves autophagosomal RAB2A and lysosomal RAB39A recruitment of HOPS subcomplexes VPS39-VPS11 and VPS41-VPS16-VPS18-VPS33A, respectively, which assemble into a functional complex to mediate membrane tethering and SNAREs-driven membrane fusion. Required for protein transport from the endoplasmic reticulum to the Golgi complex. Regulates the compacted morphology of the Golgi. Together with RAB2B, redundantly required for efficient autophagic flux. The polypeptide is Ras-related protein Rab-2A (Mus musculus (Mouse)).